A 244-amino-acid polypeptide reads, in one-letter code: Ribosomal RNA large subunit methyltransferase E (244 aa).

Residues G81, W83, D109, D125, and D149 each contribute to the S-adenosyl-L-methionine site. The Proton acceptor role is filled by K189.

Belongs to the class I-like SAM-binding methyltransferase superfamily. RNA methyltransferase RlmE family.

It is found in the cytoplasm. It carries out the reaction uridine(2552) in 23S rRNA + S-adenosyl-L-methionine = 2'-O-methyluridine(2552) in 23S rRNA + S-adenosyl-L-homocysteine + H(+). Its function is as follows. Specifically methylates the uridine in position 2552 of 23S rRNA at the 2'-O position of the ribose in the fully assembled 50S ribosomal subunit. This chain is Ribosomal RNA large subunit methyltransferase E, found in Cereibacter sphaeroides (strain ATCC 17023 / DSM 158 / JCM 6121 / CCUG 31486 / LMG 2827 / NBRC 12203 / NCIMB 8253 / ATH 2.4.1.) (Rhodobacter sphaeroides).